A 391-amino-acid polypeptide reads, in one-letter code: Elongation factor Tu (391 aa).

The tr-type G domain occupies 10–201; sequence KPHVNIGTIG…AVDEYIPTPA (192 aa). The G1 stretch occupies residues 19-26; it reads GHVDHGKT. A GTP-binding site is contributed by 19-26; sequence GHVDHGKT. Position 26 (T26) interacts with Mg(2+). Residues 55 to 59 form a G2 region; the sequence is GITIS. The interval 76–79 is G3; the sequence is DCPG. Residues 76-80 and 131-134 contribute to the GTP site; these read DCPGH and NKVD. A G4 region spans residues 131-134; it reads NKVD. Positions 169-171 are G5; it reads SAL.

It belongs to the TRAFAC class translation factor GTPase superfamily. Classic translation factor GTPase family. EF-Tu/EF-1A subfamily. As to quaternary structure, monomer.

It is found in the cytoplasm. The catalysed reaction is GTP + H2O = GDP + phosphate + H(+). GTP hydrolase that promotes the GTP-dependent binding of aminoacyl-tRNA to the A-site of ribosomes during protein biosynthesis. In Ruegeria pomeroyi (strain ATCC 700808 / DSM 15171 / DSS-3) (Silicibacter pomeroyi), this protein is Elongation factor Tu.